The sequence spans 301 residues: tRNA (guanine-N(7)-)-methyltransferase (301 aa).

Residues 1–26 (MSETPDSPRPVTPGSQASFGTYGGRP) are disordered. Positions 85, 110, 137, and 160 each coordinate S-adenosyl-L-methionine. Residue Asp-160 is part of the active site. 2 residues coordinate substrate: Lys-164 and Asp-196. The disordered stretch occupies residues 244-270 (APVREGRAPVSTEHTGPNEGVDEEGGW). 280–283 (TSFE) contributes to the substrate binding site.

Belongs to the class I-like SAM-binding methyltransferase superfamily. TrmB family.

It catalyses the reaction guanosine(46) in tRNA + S-adenosyl-L-methionine = N(7)-methylguanosine(46) in tRNA + S-adenosyl-L-homocysteine. The protein operates within tRNA modification; N(7)-methylguanine-tRNA biosynthesis. Its function is as follows. Catalyzes the formation of N(7)-methylguanine at position 46 (m7G46) in tRNA. This is tRNA (guanine-N(7)-)-methyltransferase from Paenarthrobacter aurescens (strain TC1).